The chain runs to 344 residues: Centromere protein L (344 aa).

Ser-39 carries the post-translational modification Phosphoserine. Residue Thr-43 is modified to Phosphothreonine. Position 53 is a phosphoserine (Ser-53).

The protein belongs to the CENP-L/IML3 family. Component of the CENPA-CAD complex, composed of CENPI, CENPK, CENPL, CENPO, CENPP, CENPQ, CENPR and CENPS. The CENPA-CAD complex interacts with the CENPA-NAC complex, at least composed of CENPA, CENPC, CENPH, CENPM, CENPN, CENPT and CENPU.

The protein localises to the nucleus. The protein resides in the chromosome. Its subcellular location is the centromere. In terms of biological role, component of the CENPA-CAD (nucleosome distal) complex, a complex recruited to centromeres which is involved in assembly of kinetochore proteins, mitotic progression and chromosome segregation. May be involved in incorporation of newly synthesized CENPA into centromeres via its interaction with the CENPA-NAC complex. This Homo sapiens (Human) protein is Centromere protein L (CENPL).